Reading from the N-terminus, the 396-residue chain is Protein-export membrane protein SecD (396 aa).

Helical transmembrane passes span 12–32 (ILIL…KGLD), 243–263 (LKGT…IVSI), 272–292 (IPIL…ASLI), 298–318 (LPSI…QIVI), 338–358 (FFII…LFVL), and 360–380 (VGML…GIFI).

The protein belongs to the SecD/SecF family. SecD subfamily. As to quaternary structure, part of the protein translocation apparatus. Forms a complex with SecF.

The protein localises to the cell membrane. Involved in protein export. This is Protein-export membrane protein SecD from Methanocaldococcus jannaschii (strain ATCC 43067 / DSM 2661 / JAL-1 / JCM 10045 / NBRC 100440) (Methanococcus jannaschii).